The following is a 288-amino-acid chain: 4-hydroxybenzoate octaprenyltransferase (288 aa).

7 helical membrane passes run 38-58, 98-120, 141-161, 163-183, 213-233, 238-258, and 268-288; these read IAAQSIPSLHILIVFTAGVFL, ILFASLVGLSFLLVLTLNSMTIW, LLQVVLGAAFGWSIPMGFSAV, ESLPLVCWVLFLVNILWSVIY, LIIGILQIVMIVLLVLVGSLA, VYYIALSLSALLFIYQQKLMV, and AFLNNNYVGLILFIGIFLSYL.

This sequence belongs to the UbiA prenyltransferase family. Mg(2+) serves as cofactor.

Its subcellular location is the cell inner membrane. It carries out the reaction all-trans-octaprenyl diphosphate + 4-hydroxybenzoate = 4-hydroxy-3-(all-trans-octaprenyl)benzoate + diphosphate. Its pathway is cofactor biosynthesis; ubiquinone biosynthesis. In terms of biological role, catalyzes the prenylation of para-hydroxybenzoate (PHB) with an all-trans polyprenyl group. Mediates the second step in the final reaction sequence of ubiquinone-8 (UQ-8) biosynthesis, which is the condensation of the polyisoprenoid side chain with PHB, generating the first membrane-bound Q intermediate 3-octaprenyl-4-hydroxybenzoate. In Providencia stuartii, this protein is 4-hydroxybenzoate octaprenyltransferase.